The following is a 98-amino-acid chain: C-X-C motif chemokine 10 (98 aa).

The first 21 residues, 1–21, serve as a signal peptide directing secretion; that stretch reads MNPSAAVIFCLILLGLSGTQG. Citrulline is present on arginine 26. Cystine bridges form between cysteine 30–cysteine 57 and cysteine 32–cysteine 74.

This sequence belongs to the intercrine alpha (chemokine CxC) family. In terms of assembly, monomer, dimer, and tetramer. Interacts with CXCR3 (via N-terminus). In terms of tissue distribution, expressed in the spleen, thymus, lymph nodes and liver. Expressed in astrocytes, microglia, and neurons.

The protein localises to the secreted. Pro-inflammatory cytokine that is involved in a wide variety of processes such as chemotaxis, differentiation, and activation of peripheral immune cells, regulation of cell growth, apoptosis and modulation of angiostatic effects. Plays thereby an important role during viral infections by stimulating the activation and migration of immune cells to the infected sites. Mechanistically, binding of CXCL10 to the CXCR3 receptor activates G protein-mediated signaling and results in downstream activation of phospholipase C-dependent pathway, an increase in intracellular calcium production and actin reorganization. In turn, recruitment of activated Th1 lymphocytes occurs at sites of inflammation. Activation of the CXCL10/CXCR3 axis also plays an important role in neurons in response to brain injury for activating microglia, the resident macrophage population of the central nervous system, and directing them to the lesion site. This recruitment is an essential element for neuronal reorganization. This chain is C-X-C motif chemokine 10 (Cxcl10), found in Mus musculus (Mouse).